The sequence spans 349 residues: Phenylalanine--tRNA ligase alpha subunit (349 aa).

Glutamate 258 lines the Mg(2+) pocket.

Belongs to the class-II aminoacyl-tRNA synthetase family. Phe-tRNA synthetase alpha subunit type 1 subfamily. Tetramer of two alpha and two beta subunits. The cofactor is Mg(2+).

It is found in the cytoplasm. It carries out the reaction tRNA(Phe) + L-phenylalanine + ATP = L-phenylalanyl-tRNA(Phe) + AMP + diphosphate + H(+). This is Phenylalanine--tRNA ligase alpha subunit from Rickettsia akari (strain Hartford).